Consider the following 120-residue polypeptide: Large ribosomal subunit protein bL17 (120 aa).

The protein belongs to the bacterial ribosomal protein bL17 family. In terms of assembly, part of the 50S ribosomal subunit. Contacts protein L32.

The sequence is that of Large ribosomal subunit protein bL17 from Bacillus cereus (strain ATCC 14579 / DSM 31 / CCUG 7414 / JCM 2152 / NBRC 15305 / NCIMB 9373 / NCTC 2599 / NRRL B-3711).